A 532-amino-acid polypeptide reads, in one-letter code: Putative L-lactate permease (532 aa).

The next 14 membrane-spanning stretches (helical) occupy residues 23 to 43 (ALPS…VHLL), 56 to 76 (VVSA…AILF), 101 to 121 (VAQL…ASGF), 129 to 149 (APIL…ALIM), 152 to 172 (VPVS…ALKL), 180 to 200 (IGSI…LLAL), 213 to 233 (IVFI…IAQV), 234 to 254 (NYEF…VWAA), 274 to 294 (AGEV…LIVT), 346 to 366 (LLYV…IPFF), 387 to 407 (PFIA…GGEH), 420 to 440 (ISGS…SFFS), 462 to 482 (GISV…GNMV), and 508 to 528 (IIPM…LVPL).

This sequence belongs to the lactate permease family.

The protein localises to the cell inner membrane. Functionally, may play a role in L-lactate transport. This chain is Putative L-lactate permease, found in Haemophilus influenzae (strain ATCC 51907 / DSM 11121 / KW20 / Rd).